The sequence spans 223 residues: Phosphoribosylformylglycinamidine synthase subunit PurQ (223 aa).

The Glutamine amidotransferase type-1 domain maps to 3 to 223 (FAVLVFPGSN…MVKSWREQHV (221 aa)). The active-site Nucleophile is the Cys-85. Active-site residues include His-193 and Glu-195.

In terms of assembly, part of the FGAM synthase complex composed of 1 PurL, 1 PurQ and 2 PurS subunits.

It localises to the cytoplasm. It carries out the reaction N(2)-formyl-N(1)-(5-phospho-beta-D-ribosyl)glycinamide + L-glutamine + ATP + H2O = 2-formamido-N(1)-(5-O-phospho-beta-D-ribosyl)acetamidine + L-glutamate + ADP + phosphate + H(+). The catalysed reaction is L-glutamine + H2O = L-glutamate + NH4(+). It functions in the pathway purine metabolism; IMP biosynthesis via de novo pathway; 5-amino-1-(5-phospho-D-ribosyl)imidazole from N(2)-formyl-N(1)-(5-phospho-D-ribosyl)glycinamide: step 1/2. Part of the phosphoribosylformylglycinamidine synthase complex involved in the purines biosynthetic pathway. Catalyzes the ATP-dependent conversion of formylglycinamide ribonucleotide (FGAR) and glutamine to yield formylglycinamidine ribonucleotide (FGAM) and glutamate. The FGAM synthase complex is composed of three subunits. PurQ produces an ammonia molecule by converting glutamine to glutamate. PurL transfers the ammonia molecule to FGAR to form FGAM in an ATP-dependent manner. PurS interacts with PurQ and PurL and is thought to assist in the transfer of the ammonia molecule from PurQ to PurL. This is Phosphoribosylformylglycinamidine synthase subunit PurQ from Staphylococcus aureus (strain USA300).